Consider the following 740-residue polypeptide: ABC transporter G family member 1 (740 aa).

The ABC transporter domain occupies 82 to 334 (LDFRNLFPRR…FTEFGSPIPE (253 aa)). Position 127–134 (127–134 (GASGSGKS)) interacts with ATP. Residues 434 to 644 (IEIKTLSKRS…PYEAVLQNEF (211 aa)) enclose the ABC transmembrane type-2 domain. The next 6 helical transmembrane spans lie at 453–473 (LFGI…TVFW), 488–508 (FFAF…PVFL), 529–549 (VLSH…AFAA), 563–585 (GLLF…VTFL), 594–614 (LGYT…GFFI), and 713–733 (LFIT…TLLL).

Belongs to the ABC transporter superfamily. ABCG family. Eye pigment precursor importer (TC 3.A.1.204) subfamily.

The protein resides in the membrane. The chain is ABC transporter G family member 1 (ABCG1) from Arabidopsis thaliana (Mouse-ear cress).